The chain runs to 219 residues: Inner membrane protein YghB (219 aa).

The Cytoplasmic portion of the chain corresponds to 1–17; sequence MAVIQDIIAALWQHDFA. Residues 18-38 traverse the membrane as a helical segment; it reads ALADPHIVSVVYFVMFATLFL. At 39–67 the chain is on the periplasmic side; it reads ENGLLPASFLPGDSLLILAGALIAQGVMD. A helical transmembrane segment spans residues 68–88; sequence FLPTIAILTAAASLGCWLSYI. The Cytoplasmic portion of the chain corresponds to 89–160; it reads QGRWLGNTKT…RRFQFFNWLS (72 aa). Residues 161–181 form a helical membrane-spanning segment; the sequence is GLLWVSVVTSFGYALSMIPFV. Over 182–191 the chain is Periplasmic; sequence KRHEDQVMTF. Residues 192 to 212 form a helical membrane-spanning segment; that stretch reads LMILPIALLTAGLLGTLFVVI. Topologically, residues 213-219 are cytoplasmic; that stretch reads KKKYCNA.

Belongs to the DedA family.

It is found in the cell inner membrane. In Escherichia coli O6:H1 (strain CFT073 / ATCC 700928 / UPEC), this protein is Inner membrane protein YghB (yghB).